A 911-amino-acid polypeptide reads, in one-letter code: Facilitated trehalose transporter Tret1 (911 aa).

Positions 1 to 256 are disordered; sequence MSGRDNRGAG…RIGFQQQKAT (256 aa). The Cytoplasmic segment spans residues 1-446; it reads MSGRDNRGAG…VYRPTTNPIY (446 aa). Gly residues predominate over residues 8 to 19; that stretch reads GAGGGGGGGGGG. Basic and acidic residues predominate over residues 32 to 50; it reads KLKEKLTRAGEELGYHRVE. Low complexity-rich tracts occupy residues 51–64, 76–129, and 156–166; these read SNLSTSNTGTSLDT, AAPQ…QQLR, and QQIHVQQQQQQ. Phosphoserine is present on residues Ser-302, Ser-303, and Ser-304. A disordered region spans residues 334–355; the sequence is VLQGSSTDSDEEGDDAEHKRLI. Phosphoserine is present on residues Ser-374 and Ser-376. Residues 380–402 are disordered; it reads FLTSRQNFQQQRSISTDSRKSRR. Residues 384-395 are compositionally biased toward polar residues; it reads RQNFQQQRSIST. Residues 447–467 form a helical membrane-spanning segment; sequence IWTQVLAALSVSLGSLVVGFA. Over 468 to 494 the chain is Extracellular; that stretch reads SAYTSPALVSMTNTNLTSFVVTPQAAS. The N-linked (GlcNAc...) asparagine glycan is linked to Asn-482. Residues 495–515 form a helical membrane-spanning segment; sequence WVGGIMPLAGLAGGIAGGPFI. Residues 516 to 527 lie on the Cytoplasmic side of the membrane; it reads EYLGRRNTILAT. Residues 528-548 traverse the membrane as a helical segment; sequence AVPFIVSWLLIACAVNVIMVL. Residues 549–551 are Extracellular-facing; sequence CGR. Residues 552 to 572 form a helical membrane-spanning segment; it reads FLAGFCVGIASLSLPVYLGET. Topologically, residues 573-578 are cytoplasmic; sequence VQPEVR. A helical membrane pass occupies residues 579–599; sequence GTLGLLPTAFGNIGILLCFVA. At 600–606 the chain is on the extracellular side; that stretch reads GTYMDWS. The chain crosses the membrane as a helical span at residues 607 to 627; it reads MLAFLGASLPVPFLILMFLIP. At 628-690 the chain is on the cytoplasmic side; that stretch reads ETPRWYVSRG…ELLKRSNLKP (63 aa). Residues 691-711 form a helical membrane-spanning segment; sequence LSISLGLMFFQQLSGINAVIF. Residues 712-727 are Extracellular-facing; the sequence is YTVQIFQDAGSTIDGN. A helical transmembrane segment spans residues 728–748; that stretch reads VCTIIVGVVNFAATFIATILI. Over 749–754 the chain is Cytoplasmic; sequence DRAGRK. A helical membrane pass occupies residues 755 to 775; that stretch reads VLLYVSNVMMVLTLFVLGGFF. Residues 776–794 are Extracellular-facing; sequence YCKSSGMDTSNVGWLPLSC. A helical transmembrane segment spans residues 795-815; the sequence is FVIYILGFSLGFGPIPWLMMG. The Cytoplasmic segment spans residues 816–821; sequence EILPAK. A helical membrane pass occupies residues 822–842; sequence IRGSAASVATAFNWSCTFVVT. Residues 843–855 lie on the Extracellular side of the membrane; that stretch reads KSFQDMIDFMGAH. A helical membrane pass occupies residues 856-876; that stretch reads GAFWMFGAICFIGLFFVIFYV. The Cytoplasmic segment spans residues 877–911; sequence PETQGKTLEDIERKMMGRVRRMSSVANIKPLSFNM. Ser-899 and Ser-900 each carry phosphoserine.

Belongs to the major facilitator superfamily. Sugar transporter (TC 2.A.1.1) family. Trehalose transporter subfamily.

Its subcellular location is the cell membrane. Functionally, low-capacity facilitative transporter for trehalose. Does not transport maltose, sucrose or lactose. Mediates the bidirectional transfer of trehalose. Responsible for the transport of trehalose synthesized in the fat body and the incorporation of trehalose into other tissues that require a carbon source, thereby regulating trehalose levels in the hemolymph. The polypeptide is Facilitated trehalose transporter Tret1 (Drosophila virilis (Fruit fly)).